We begin with the raw amino-acid sequence, 139 residues long: Arsenate reductase (139 aa).

Active-site nucleophile residues include Cys10, Cys82, and Cys89. Intrachain disulfides connect Cys10-Cys82 and Cys82-Cys89.

This sequence belongs to the low molecular weight phosphotyrosine protein phosphatase family. Thioredoxin-coupled ArsC subfamily.

Its subcellular location is the cytoplasm. The enzyme catalyses arsenate + [thioredoxin]-dithiol + H(+) = arsenite + [thioredoxin]-disulfide + H2O. Catalyzes the reduction of arsenate [As(V)] to arsenite [As(III)]. This chain is Arsenate reductase, found in Shouchella clausii (strain KSM-K16) (Alkalihalobacillus clausii).